A 267-amino-acid chain; its full sequence is Integral membrane protein 2C (267 aa).

At Thr-37 the chain carries Phosphothreonine. The chain crosses the membrane as a helical; Signal-anchor for type II membrane protein span at residues 55-75 (VGGVCYLSMGMVVLLMGLVFA). Residues 136-230 (FGGGDPADII…LCNGKDTYRL (95 aa)) form the BRICHOS domain. A disulfide bridge links Cys-163 with Cys-222. Asn-169 is a glycosylation site (N-linked (GlcNAc...) asparagine).

The protein belongs to the ITM2 family. In terms of assembly, interacts with BACE1. Interacts with APP. Interacts with STMN2. Post-translationally, type I membrane-bound, as well as soluble, furin has a pre-eminent role in ITM2C proteolytic processing. PCSK7 and PCSK5 may also be involved although to a lesser extent. The soluble form of PCSK7 is incapable of processing ITM2C. Fails to undergo shedding by ADAM10 and intramembrane cleavage by SPPL2B. As to expression, high levels in the brain, specifically in the cerebral cortex, medulla, amygdala, hippocampus, thalamus, caudate nucleus, cerebellum, olfactory lobe and spinal cord. Very low levels in other organs.

It localises to the lysosome membrane. The protein localises to the cell membrane. Functionally, negative regulator of amyloid-beta peptide production. May inhibit the processing of APP by blocking its access to alpha- and beta-secretase. Binding to the beta-secretase-cleaved APP C-terminal fragment is negligible, suggesting that ITM2C is a poor gamma-secretase cleavage inhibitor. May play a role in TNF-induced cell death and neuronal differentiation. In Homo sapiens (Human), this protein is Integral membrane protein 2C (ITM2C).